A 315-amino-acid polypeptide reads, in one-letter code: Putative carboxypeptidase RC0549 (315 aa).

Ser125 acts as the Nucleophile in catalysis. Catalysis depends on charge relay system residues Glu225 and His288.

It belongs to the peptidase S66 family.

In Rickettsia conorii (strain ATCC VR-613 / Malish 7), this protein is Putative carboxypeptidase RC0549.